The primary structure comprises 355 residues: UDP-N-acetylglucosamine--N-acetylmuramyl-(pentapeptide) pyrophosphoryl-undecaprenol N-acetylglucosamine transferase (355 aa).

UDP-N-acetyl-alpha-D-glucosamine is bound by residues 15–17 (TGG), Asn127, Arg163, Ser191, Ile244, 263–268 (ALTVSE), and Gln288.

It belongs to the glycosyltransferase 28 family. MurG subfamily.

It is found in the cell inner membrane. The enzyme catalyses di-trans,octa-cis-undecaprenyl diphospho-N-acetyl-alpha-D-muramoyl-L-alanyl-D-glutamyl-meso-2,6-diaminopimeloyl-D-alanyl-D-alanine + UDP-N-acetyl-alpha-D-glucosamine = di-trans,octa-cis-undecaprenyl diphospho-[N-acetyl-alpha-D-glucosaminyl-(1-&gt;4)]-N-acetyl-alpha-D-muramoyl-L-alanyl-D-glutamyl-meso-2,6-diaminopimeloyl-D-alanyl-D-alanine + UDP + H(+). The protein operates within cell wall biogenesis; peptidoglycan biosynthesis. In terms of biological role, cell wall formation. Catalyzes the transfer of a GlcNAc subunit on undecaprenyl-pyrophosphoryl-MurNAc-pentapeptide (lipid intermediate I) to form undecaprenyl-pyrophosphoryl-MurNAc-(pentapeptide)GlcNAc (lipid intermediate II). The chain is UDP-N-acetylglucosamine--N-acetylmuramyl-(pentapeptide) pyrophosphoryl-undecaprenol N-acetylglucosamine transferase from Escherichia coli O45:K1 (strain S88 / ExPEC).